The chain runs to 440 residues: Proline--tRNA ligase (440 aa).

The protein belongs to the class-II aminoacyl-tRNA synthetase family. ProS type 2 subfamily. Homodimer.

It is found in the cytoplasm. The enzyme catalyses tRNA(Pro) + L-proline + ATP = L-prolyl-tRNA(Pro) + AMP + diphosphate. Its function is as follows. Catalyzes the attachment of proline to tRNA(Pro) in a two-step reaction: proline is first activated by ATP to form Pro-AMP and then transferred to the acceptor end of tRNA(Pro). This is Proline--tRNA ligase from Rhizobium etli (strain ATCC 51251 / DSM 11541 / JCM 21823 / NBRC 15573 / CFN 42).